Reading from the N-terminus, the 110-residue chain is Large ribosomal subunit protein uL22 (110 aa).

This sequence belongs to the universal ribosomal protein uL22 family. As to quaternary structure, part of the 50S ribosomal subunit.

In terms of biological role, this protein binds specifically to 23S rRNA; its binding is stimulated by other ribosomal proteins, e.g. L4, L17, and L20. It is important during the early stages of 50S assembly. It makes multiple contacts with different domains of the 23S rRNA in the assembled 50S subunit and ribosome. The globular domain of the protein is located near the polypeptide exit tunnel on the outside of the subunit, while an extended beta-hairpin is found that lines the wall of the exit tunnel in the center of the 70S ribosome. The polypeptide is Large ribosomal subunit protein uL22 (Vibrio campbellii (strain ATCC BAA-1116)).